Consider the following 337-residue polypeptide: Anthranilate phosphoribosyltransferase (337 aa).

5-phospho-alpha-D-ribose 1-diphosphate contacts are provided by residues Gly81, 84 to 85 (GD), Ser89, 91 to 94 (NVST), 109 to 117 (KHGNRALSS), and Ala121. Gly81 lines the anthranilate pocket. Ser93 lines the Mg(2+) pocket. Asn112 is a binding site for anthranilate. Arg167 is a binding site for anthranilate. Positions 226 and 227 each coordinate Mg(2+).

This sequence belongs to the anthranilate phosphoribosyltransferase family. In terms of assembly, homodimer. The cofactor is Mg(2+).

It carries out the reaction N-(5-phospho-beta-D-ribosyl)anthranilate + diphosphate = 5-phospho-alpha-D-ribose 1-diphosphate + anthranilate. The protein operates within amino-acid biosynthesis; L-tryptophan biosynthesis; L-tryptophan from chorismate: step 2/5. Its function is as follows. Catalyzes the transfer of the phosphoribosyl group of 5-phosphorylribose-1-pyrophosphate (PRPP) to anthranilate to yield N-(5'-phosphoribosyl)-anthranilate (PRA). This Nitrobacter hamburgensis (strain DSM 10229 / NCIMB 13809 / X14) protein is Anthranilate phosphoribosyltransferase.